Consider the following 129-residue polypeptide: Small ribosomal subunit protein uS11 (129 aa).

It belongs to the universal ribosomal protein uS11 family. As to quaternary structure, part of the 30S ribosomal subunit. Interacts with proteins S7 and S18. Binds to IF-3.

In terms of biological role, located on the platform of the 30S subunit, it bridges several disparate RNA helices of the 16S rRNA. Forms part of the Shine-Dalgarno cleft in the 70S ribosome. The protein is Small ribosomal subunit protein uS11 of Limosilactobacillus fermentum (strain NBRC 3956 / LMG 18251) (Lactobacillus fermentum).